Here is a 2148-residue protein sequence, read N- to C-terminus: Polyketide synthase 1 (2148 aa).

Residues 19–261 (FIFGDQSSCN…TPLAVHAPYH (243 aa)) form an N-terminal acylcarrier protein transacylase domain (SAT) region. Residues 394–829 (ESKIAIIGMS…GGNTALLVED (436 aa)) enclose the Ketosynthase family 3 (KS3) domain. Catalysis depends on for beta-ketoacyl synthase activity residues Cys566, His701, and His745. The interval 929–1233 (AFVFSGQGSQ…PSLMRNKDGW (305 aa)) is malonyl-CoA:ACP transacylase (MAT) domain. Ser1018 serves as the catalytic For acyl/malonyl transferase activity. The tract at residues 1310 to 1624 (TASVHRIVHE…RKVLNTAMPP (315 aa)) is product template (PT) domain. The tract at residues 1314–1447 (HRIVHESVEK…SSLHFEQPKV (134 aa)) is N-terminal hotdog fold. One can recognise a PKS/mFAS DH domain in the interval 1314–1619 (HRIVHESVEK…FQGIPRKVLN (306 aa)). His1346 (proton acceptor; for dehydratase activity) is an active-site residue. The tract at residues 1474–1619 (LNSRMSSGVI…FQGIPRKVLN (146 aa)) is C-terminal hotdog fold. Asp1533 acts as the Proton donor; for dehydratase activity in catalysis. The segment at 1619–1655 (NTAMPPPKSQNEAPVRSGPAKPAVKPPRSASSEHSGH) is disordered. In terms of domain architecture, Carrier 1 spans 1678–1752 (RNPMLPVFKI…DLAAHLGMDT (75 aa)). Ser1712 is modified (O-(pantetheine 4'-phosphoryl)serine). Low complexity predominate over residues 1755-1790 (ADQSSGQSSSSGGLSPRSDSIGEMTSSATTPPSMSP). Positions 1755–1796 (ADQSSGQSSSSGGLSPRSDSIGEMTSSATTPPSMSPRGSVSG) are disordered. The Carrier 2 domain maps to 1793–1870 (SVSGSQCKDV…SFKHMFQQGH (78 aa)). Ser1830 carries the post-translational modification O-(pantetheine 4'-phosphoryl)serine. Residues 1882–2146 (LKQYRATSTL…ERVAAFIRSI (265 aa)) form a thioesterase (TE) domain region. Residue Ser1973 is the For thioesterase activity of the active site.

Functionally, polyketide synthase; part of the Pks1 gene cluster that mediates the biosynthesis of an anthraquinone derivative pigment that contributes to conidial pigmentation that provides protection from UV radiation, heat and cold stress. The polyketide synthase Pks1 produces 1-acetyl-2,4,6,8-tetrahydroxy-9,10-anthraquinone though condensation of acetyl-CoA with malonyl-CoA. The dehydratase EthD and the laccase Mlac1 further convert the anthraquinone derivative into the final conidial pigment. The chain is Polyketide synthase 1 from Metarhizium brunneum (strain ARSEF 3297).